The primary structure comprises 1695 residues: Sialoadhesin (1695 aa).

Residues 1 to 19 (MCVLFSLLLLASVFSLGQT) form the signal peptide. The region spanning 20 to 136 (TWGVSSPKNV…DVKGTTVTVT (117 aa)) is the Ig-like V-type domain. Residues 20–1639 (TWGVSSPKNV…ALHQLQLFQR (1620 aa)) are Extracellular-facing. Intrachain disulfides connect Cys36–Cys166, Cys41–Cys98, Cys160–Cys218, and Cys263–Cys306. N-acetylneuraminate is bound by residues Tyr63, Arg116, and 122 to 126 (SNRWL). Ig-like C2-type domains lie at 153-235 (GMER…YLQV), 239-321 (PKGV…SPLS), 326-406 (MAEV…SPLS), 416-508 (PDLT…LDFY), 509-594 (ANVA…TVLT), 602-701 (PTFT…ASFN), 704-781 (ATVL…AQLS), 795-890 (PKLS…FQVR), 894-973 (VQVS…APVS), 980-1079 (PRHV…ADFD), 1081-1161 (QAVR…RPVT), 1172-1264 (RLTY…MNPS), 1245-1337 (KANT…ASLQ), 1342-1439 (PRDA…RLLT), 1442-1520 (DIRV…ATTS), and 1534-1627 (PTLI…AYFG). Asn159 carries N-linked (GlcNAc...) asparagine glycosylation. N-linked (GlcNAc...) asparagine glycans are attached at residues Asn266, Asn299, and Asn340. Disulfide bonds link Cys347/Cys391 and Cys434/Cys492. A glycan (N-linked (GlcNAc...) asparagine) is linked at Asn500. Residues Cys532 and Cys576 are joined by a disulfide bond. Asn583 carries an N-linked (GlcNAc...) asparagine glycan. A disulfide bridge links Cys625 with Cys685. N-linked (GlcNAc...) asparagine glycans are attached at residues Asn693, Asn722, and Asn737. Disulfide bonds link Cys725–Cys770 and Cys813–Cys872. Positions 827–829 (RGD) match the Cell attachment site motif. The N-linked (GlcNAc...) asparagine glycan is linked to Asn882. Disulfide bonds link Cys912–Cys956 and Cys1001–Cys1063. N-linked (GlcNAc...) asparagine glycans are attached at residues Asn1090 and Asn1100. 2 disulfide bridges follow: Cys1103-Cys1145 and Cys1189-Cys1237. Asn1247 carries an N-linked (GlcNAc...) asparagine glycan. 2 disulfide bridges follow: Cys1277-Cys1320 and Cys1363-Cys1422. Asn1460 and Asn1474 each carry an N-linked (GlcNAc...) asparagine glycan. 2 cysteine pairs are disulfide-bonded: Cys1463/Cys1509 and Cys1552/Cys1611. Residues 1640-1660 (LLWVLGFLAGFLCLLLGLVAY) form a helical membrane-spanning segment. At 1661–1695 (HTWRKKSSTKLNEDENSAEMATKKNTIQEEVVAAL) the chain is on the cytoplasmic side.

Belongs to the immunoglobulin superfamily. SIGLEC (sialic acid binding Ig-like lectin) family. Interacts with CLEC10A. In terms of tissue distribution, detected in lymph node in the subcapsular sinus, interfollicular regions, and T and B-cell boundary (at protein level). Expressed by macrophages in various tissues. Highest expression in spleen and lymph node with lower amounts in lung, liver, bone marrow, heart and skin. No expression in thymus, kidney, brain or small intestine.

Its subcellular location is the cell membrane. The protein resides in the secreted. Macrophage-restricted adhesion molecule that mediates sialic-acid dependent binding to lymphocytes, including granulocytes, monocytes, natural killer cells, B-cells and CD8 T-cells. Plays a crucial role in limiting bacterial dissemination by engaging sialylated bacteria to promote effective phagocytosis and antigen presentation for the adaptive immune response. Mediates the uptake of various enveloped viruses via sialic acid recognition and subsequently induces the formation of intracellular compartments filled with virions (VCCs). In turn, enhances macrophage-to-T-cell transmission of several viruses including murine leukemia virus. Acts as an endocytic receptor mediating clathrin dependent endocytosis. Preferentially binds to alpha-2,3-linked sialic acid. Binds to SPN/CD43 on T-cells. May play a role in hemopoiesis. Plays a role in the inhibition of antiviral innate immune by promoting TBK1 degradation via TYROBP and TRIM27-mediated ubiquitination. The protein is Sialoadhesin (Siglec1) of Mus musculus (Mouse).